The primary structure comprises 689 residues: DNA ligase (689 aa).

Residues 40-44 (DAEYD), 89-90 (SL), and Glu121 contribute to the NAD(+) site. Lys123 (N6-AMP-lysine intermediate) is an active-site residue. Positions 144, 179, 295, and 319 each coordinate NAD(+). Positions 413, 416, 431, and 437 each coordinate Zn(2+). One can recognise a BRCT domain in the interval 610–689 (KEHSSLTGKI…EEWLTIVNNV (80 aa)).

It belongs to the NAD-dependent DNA ligase family. LigA subfamily. The cofactor is Mg(2+). Requires Mn(2+) as cofactor.

It catalyses the reaction NAD(+) + (deoxyribonucleotide)n-3'-hydroxyl + 5'-phospho-(deoxyribonucleotide)m = (deoxyribonucleotide)n+m + AMP + beta-nicotinamide D-nucleotide.. Functionally, DNA ligase that catalyzes the formation of phosphodiester linkages between 5'-phosphoryl and 3'-hydroxyl groups in double-stranded DNA using NAD as a coenzyme and as the energy source for the reaction. It is essential for DNA replication and repair of damaged DNA. The polypeptide is DNA ligase (Rickettsia canadensis (strain McKiel)).